Here is a 332-residue protein sequence, read N- to C-terminus: Tsukubadiene synthase (332 aa).

Aspartate 75 and glutamate 80 together coordinate Mg(2+). The DDXXXE motif motif lies at 75–80; the sequence is DDHLDE. Substrate is bound at residue arginine 165. Residues serine 212, serine 216, and glutamate 220 each contribute to the Mg(2+) site. Positions 212–220 match the SXXXSXXXE motif motif; it reads SDLHSFQLE. A substrate-binding site is contributed by 298-299; that stretch reads RY.

It belongs to the terpene synthase family. Requires Mg(2+) as cofactor.

It catalyses the reaction (2E,6E,10E)-geranylgeranyl diphosphate = tsukubadiene + diphosphate. Functionally, catalyzes the formation of the 5-9-5 ring skeleton (3S,6S,11R,14S)-tsukubadiene from geranylgeranyl diphosphate (GGPP) via a 1,11-cyclization and a 10Re,14Re-cyclization. The chain is Tsukubadiene synthase from Streptomyces tsukubensis (strain DSM 42081 / NBRC 108919 / NRRL 18488 / 9993).